Consider the following 345-residue polypeptide: MPLDILQNRNNLLDVTSDEKQTEGALRPKLLAEFVGQNKVKNQLALLIQAAKIQGRVTDHALLAGPPGLGKTTLAMIVAAECGVSIRMSSGPAIQHAGDLAALLSSLLPGELLFIDEIHRMSRVAEEMLYLAMEDFRIDIMVGKGPGATSVPLELSPFTLVGATTRAGLLPGPLRDRFGFTARLDFYSPEELLQVLIRSARLMEIQYYDDALESIAVRSRGTPRVANRLLRRTRDYLLVSNSSEILSKEIALKAMDVYEVDSLGLDRLDRAVLHAIFDRFSGGPVGIKTLSAYLGEEAETIENSIEPFLVRQGLLVRTPRGRQITDLARKHMGFKEDLSGFELYL.

Positions 3-187 (LDILQNRNNL…FGFTARLDFY (185 aa)) are large ATPase domain (RuvB-L). ATP-binding positions include L26, R27, G68, K71, T72, T73, 134-136 (EDF), R177, Y187, and R224. Residue T72 coordinates Mg(2+). A small ATPAse domain (RuvB-S) region spans residues 188–259 (SPEELLQVLI…IALKAMDVYE (72 aa)). The segment at 262–345 (SLGLDRLDRA…EDLSGFELYL (84 aa)) is head domain (RuvB-H). DNA is bound by residues R317 and R322.

It belongs to the RuvB family. In terms of assembly, homohexamer. Forms an RuvA(8)-RuvB(12)-Holliday junction (HJ) complex. HJ DNA is sandwiched between 2 RuvA tetramers; dsDNA enters through RuvA and exits via RuvB. An RuvB hexamer assembles on each DNA strand where it exits the tetramer. Each RuvB hexamer is contacted by two RuvA subunits (via domain III) on 2 adjacent RuvB subunits; this complex drives branch migration. In the full resolvosome a probable DNA-RuvA(4)-RuvB(12)-RuvC(2) complex forms which resolves the HJ.

The protein resides in the cytoplasm. The catalysed reaction is ATP + H2O = ADP + phosphate + H(+). The RuvA-RuvB-RuvC complex processes Holliday junction (HJ) DNA during genetic recombination and DNA repair, while the RuvA-RuvB complex plays an important role in the rescue of blocked DNA replication forks via replication fork reversal (RFR). RuvA specifically binds to HJ cruciform DNA, conferring on it an open structure. The RuvB hexamer acts as an ATP-dependent pump, pulling dsDNA into and through the RuvAB complex. RuvB forms 2 homohexamers on either side of HJ DNA bound by 1 or 2 RuvA tetramers; 4 subunits per hexamer contact DNA at a time. Coordinated motions by a converter formed by DNA-disengaged RuvB subunits stimulates ATP hydrolysis and nucleotide exchange. Immobilization of the converter enables RuvB to convert the ATP-contained energy into a lever motion, pulling 2 nucleotides of DNA out of the RuvA tetramer per ATP hydrolyzed, thus driving DNA branch migration. The RuvB motors rotate together with the DNA substrate, which together with the progressing nucleotide cycle form the mechanistic basis for DNA recombination by continuous HJ branch migration. Branch migration allows RuvC to scan DNA until it finds its consensus sequence, where it cleaves and resolves cruciform DNA. The protein is Holliday junction branch migration complex subunit RuvB of Tropheryma whipplei (strain TW08/27) (Whipple's bacillus).